Consider the following 357-residue polypeptide: 4-hydroxyphenylpyruvate dioxygenase (357 aa).

VOC domains follow at residues 12-129 and 158-313; these read GFEF…LIDR and IIDH…IFSE. 3 residues coordinate Fe cation: H161, H240, and E322.

This sequence belongs to the 4HPPD family. As to quaternary structure, homotetramer. It depends on Fe cation as a cofactor.

It carries out the reaction 3-(4-hydroxyphenyl)pyruvate + O2 = homogentisate + CO2. Its pathway is amino-acid degradation; L-phenylalanine degradation; acetoacetate and fumarate from L-phenylalanine: step 3/6. The polypeptide is 4-hydroxyphenylpyruvate dioxygenase (hpd) (Pseudomonas sp. (strain P.J. 874)).